Consider the following 346-residue polypeptide: DNA-directed RNA polymerase subunit alpha (346 aa).

Residues 1-233 form an alpha N-terminal domain (alpha-NTD) region; it reads MLRDEVAVSA…DLFIPFLHAE (233 aa). The alpha C-terminal domain (alpha-CTD) stretch occupies residues 268–346; that stretch reads IELKCIFIDQ…NKFLIGNPSE (79 aa).

It belongs to the RNA polymerase alpha chain family. As to quaternary structure, in plastids the minimal PEP RNA polymerase catalytic core is composed of four subunits: alpha, beta, beta', and beta''. When a (nuclear-encoded) sigma factor is associated with the core the holoenzyme is formed, which can initiate transcription.

The protein localises to the plastid. It is found in the chloroplast. The catalysed reaction is RNA(n) + a ribonucleoside 5'-triphosphate = RNA(n+1) + diphosphate. Functionally, DNA-dependent RNA polymerase catalyzes the transcription of DNA into RNA using the four ribonucleoside triphosphates as substrates. This Ranunculus macranthus (Large buttercup) protein is DNA-directed RNA polymerase subunit alpha.